A 427-amino-acid chain; its full sequence is Homeobox protein knotted-1-like 3 (427 aa).

Disordered regions lie at residues 19 to 49 (QTHH…QPAP) and 272 to 291 (TGVS…EDDQ). Residues 272–284 (TGVSPGEGTSATM) show a composition bias toward polar residues. Residues 330 to 350 (ELKHELKQGYKEKIVDIREEI) enclose the ELK domain. A DNA-binding region (homeobox; TALE-type) is located at residues 351–414 (LRKRRAGKLP…NQRKRNWHSN (64 aa)).

This sequence belongs to the TALE/KNOX homeobox family. Maximally expressed in sepals, petals and fully expanded leaves. Also expressed in other flower organs and in developing leaves. Low level expression in stem internodes.

It is found in the nucleus. This is Homeobox protein knotted-1-like 3 from Malus domestica (Apple).